A 105-amino-acid chain; its full sequence is Guanidinium exporter (105 aa).

A helical membrane pass occupies residues 1-21 (MSWIILVIAGLLEVVWAVGLK). At 22-28 (YTHGFSR) the chain is on the cytoplasmic side. A helical membrane pass occupies residues 29–49 (LTPSVITVTAMIVSMALLAWA). The Periplasmic portion of the chain corresponds to 50 to 57 (MKSLPVGT). The chain crosses the membrane as a helical span at residues 58 to 78 (AYAVWTGIGAVGAAITGIVLL). The Cytoplasmic segment spans residues 79–81 (GES). The helical transmembrane segment at 82–102 (ANPMRLASLALIVLGIIGLKL) threads the bilayer. Topologically, residues 103–105 (STH) are periplasmic.

The protein belongs to the drug/metabolite transporter (DMT) superfamily. Small multidrug resistance (SMR) (TC 2.A.7.1) family. Gdx/SugE subfamily.

It localises to the cell inner membrane. Its function is as follows. Guanidinium ion exporter. Couples guanidinium export to the proton motive force, exchanging one guanidinium ion for two protons. The protein is Guanidinium exporter of Escherichia coli O157:H7.